The sequence spans 197 residues: Endo-1,4-beta-xylanase A (197 aa).

Residues 1 to 197 (SGTPSSTGTD…SSGTATITVT (197 aa)) form the GH11 domain. Residue Glu-87 is the Nucleophile of the active site. Cys-111 and Cys-160 are joined by a disulfide. Glu-184 acts as the Proton donor in catalysis.

This sequence belongs to the glycosyl hydrolase 11 (cellulase G) family.

It is found in the secreted. The enzyme catalyses Endohydrolysis of (1-&gt;4)-beta-D-xylosidic linkages in xylans.. It functions in the pathway glycan degradation; xylan degradation. In terms of biological role, hydrolyzes xylans into xylobiose and xylose. The polypeptide is Endo-1,4-beta-xylanase A (XYNA) (Schizophyllum commune (Split gill fungus)).